The chain runs to 238 residues: uncharacterized protein (238 aa).

The S4 RNA-binding domain maps to 1 to 64; that stretch reads MRLDKYLSKS…KPKKNVYLML (64 aa). The active-site Nucleophile is Asp-103.

Belongs to the pseudouridine synthase RsuA family.

The enzyme catalyses a uridine in RNA = a pseudouridine in RNA. This is an uncharacterized protein from Aquifex aeolicus (strain VF5).